The primary structure comprises 152 residues: UPF0756 membrane protein PEPE_1090 (152 aa).

4 helical membrane-spanning segments follow: residues 4 to 24 (WLFLIGIFIVALLGKNQSLII), 52 to 72 (WGVTIISITILVPIATGKIGF), 85 to 105 (WIAVACGILVSLLSYQGVGFL), and 115 to 135 (LVMGTIIGVVFMNGIAAGPII).

Belongs to the UPF0756 family.

Its subcellular location is the cell membrane. The polypeptide is UPF0756 membrane protein PEPE_1090 (Pediococcus pentosaceus (strain ATCC 25745 / CCUG 21536 / LMG 10740 / 183-1w)).